The following is a 648-amino-acid chain: Acetyl-coenzyme A synthetase (648 aa).

CoA is bound by residues 190–193, T308, and N332; that span reads RGGK. ATP contacts are provided by residues 384 to 386, 408 to 413, D497, and R512; these read GEP and DTWWQT. Position 520 (S520) interacts with CoA. R523 serves as a coordination point for ATP. Residues V534, H536, and V539 each coordinate Mg(2+). R581 lines the CoA pocket. K606 bears the N6-acetyllysine mark.

It belongs to the ATP-dependent AMP-binding enzyme family. It depends on Mg(2+) as a cofactor. Acetylated. Deacetylation by the SIR2-homolog deacetylase activates the enzyme.

The catalysed reaction is acetate + ATP + CoA = acetyl-CoA + AMP + diphosphate. In terms of biological role, catalyzes the conversion of acetate into acetyl-CoA (AcCoA), an essential intermediate at the junction of anabolic and catabolic pathways. AcsA undergoes a two-step reaction. In the first half reaction, AcsA combines acetate with ATP to form acetyl-adenylate (AcAMP) intermediate. In the second half reaction, it can then transfer the acetyl group from AcAMP to the sulfhydryl group of CoA, forming the product AcCoA. This is Acetyl-coenzyme A synthetase from Bradyrhizobium diazoefficiens (strain JCM 10833 / BCRC 13528 / IAM 13628 / NBRC 14792 / USDA 110).